Here is a 782-residue protein sequence, read N- to C-terminus: Coiled-coil alpha-helical rod protein 1 (782 aa).

Composition is skewed to basic and acidic residues over residues 62–74 (ERDVSSDRQEPGR) and 208–218 (ETRRAGEAKEL). Disordered stretches follow at residues 62 to 82 (ERDVSSDRQEPGRRGRSWGLE) and 191 to 218 (SSLTSKAEGLEKSLSSLETRRAGEAKEL). Coiled-coil stretches lie at residues 82 to 314 (EGSQ…ELTR), 344 to 435 (LMVQ…VVNA), and 498 to 691 (VADV…QQEG).

It localises to the cytoplasm. The protein resides in the nucleus. May be a regulator of keratinocyte proliferation or differentiation. The sequence is that of Coiled-coil alpha-helical rod protein 1 (CCHCR1) from Pongo pygmaeus (Bornean orangutan).